The following is a 115-amino-acid chain: Small ribosomal subunit protein uS13 (115 aa).

Residues 92–115 are disordered; the sequence is RRGLPVRGQNTKNNARTRKGSKRK. A compositionally biased stretch (basic residues) spans 106-115; that stretch reads ARTRKGSKRK.

It belongs to the universal ribosomal protein uS13 family. As to quaternary structure, part of the 30S ribosomal subunit. Forms a loose heterodimer with protein S19. Forms two bridges to the 50S subunit in the 70S ribosome.

Its function is as follows. Located at the top of the head of the 30S subunit, it contacts several helices of the 16S rRNA. In the 70S ribosome it contacts the 23S rRNA (bridge B1a) and protein L5 of the 50S subunit (bridge B1b), connecting the 2 subunits; these bridges are implicated in subunit movement. Contacts the tRNAs in the A and P-sites. In Lactobacillus gasseri (strain ATCC 33323 / DSM 20243 / BCRC 14619 / CIP 102991 / JCM 1131 / KCTC 3163 / NCIMB 11718 / NCTC 13722 / AM63), this protein is Small ribosomal subunit protein uS13.